Here is a 248-residue protein sequence, read N- to C-terminus: Urease accessory protein UreG 1 (248 aa).

Residues 1 to 14 show a composition bias toward basic and acidic residues; it reads MLPEHHDHGHEHGG. Residues 1-36 form a disordered region; that stretch reads MLPEHHDHGHEHGGNGHGHGHRHQVNFDPTAAEPDP. 53–60 serves as a coordination point for GTP; it reads GPVGSGKT.

This sequence belongs to the SIMIBI class G3E GTPase family. UreG subfamily. As to quaternary structure, homodimer. UreD, UreF and UreG form a complex that acts as a GTP-hydrolysis-dependent molecular chaperone, activating the urease apoprotein by helping to assemble the nickel containing metallocenter of UreC. The UreE protein probably delivers the nickel.

It localises to the cytoplasm. In terms of biological role, facilitates the functional incorporation of the urease nickel metallocenter. This process requires GTP hydrolysis, probably effectuated by UreG. This chain is Urease accessory protein UreG 1, found in Saccharopolyspora erythraea (strain ATCC 11635 / DSM 40517 / JCM 4748 / NBRC 13426 / NCIMB 8594 / NRRL 2338).